The sequence spans 385 residues: 8-amino-7-oxononanoate synthase (385 aa).

R21 lines the substrate pocket. Pyridoxal 5'-phosphate is bound at residue 108–109 (GF). H133 provides a ligand contact to substrate. The pyridoxal 5'-phosphate site is built by S179, H207, and T233. The residue at position 236 (K236) is an N6-(pyridoxal phosphate)lysine. T352 lines the substrate pocket.

It belongs to the class-II pyridoxal-phosphate-dependent aminotransferase family. BioF subfamily. Homodimer. Requires pyridoxal 5'-phosphate as cofactor.

It catalyses the reaction 6-carboxyhexanoyl-[ACP] + L-alanine + H(+) = (8S)-8-amino-7-oxononanoate + holo-[ACP] + CO2. It participates in cofactor biosynthesis; biotin biosynthesis. Its function is as follows. Catalyzes the decarboxylative condensation of pimeloyl-[acyl-carrier protein] and L-alanine to produce 8-amino-7-oxononanoate (AON), [acyl-carrier protein], and carbon dioxide. The chain is 8-amino-7-oxononanoate synthase from Salmonella agona (strain SL483).